The chain runs to 856 residues: FO synthase (856 aa).

2 consecutive Radical SAM core domains span residues 84–336 and 544–785; these read ISYS…APPN and VTFV…SHIQ. The tract at residues 85–417 is cofG-like; it reads SYSRKVFIPV…PRVRGHVVAL (333 aa). [4Fe-4S] cluster-binding residues include C98, C102, C105, C558, C562, and C565. A cofH-like region spans residues 521–854; the sequence is DGPALEAVAA…RQRTTTYALL (334 aa).

In the N-terminal section; belongs to the radical SAM superfamily. CofG family. The protein in the C-terminal section; belongs to the radical SAM superfamily. CofH family. It depends on [4Fe-4S] cluster as a cofactor.

The catalysed reaction is 5-amino-6-(D-ribitylamino)uracil + L-tyrosine + S-adenosyl-L-methionine = 5-amino-5-(4-hydroxybenzyl)-6-(D-ribitylimino)-5,6-dihydrouracil + 2-iminoacetate + 5'-deoxyadenosine + L-methionine + H(+). It carries out the reaction 5-amino-5-(4-hydroxybenzyl)-6-(D-ribitylimino)-5,6-dihydrouracil + S-adenosyl-L-methionine = 7,8-didemethyl-8-hydroxy-5-deazariboflavin + 5'-deoxyadenosine + L-methionine + NH4(+) + H(+). It functions in the pathway cofactor biosynthesis; coenzyme F0 biosynthesis. Catalyzes the radical-mediated synthesis of 7,8-didemethyl-8-hydroxy-5-deazariboflavin (FO) from 5-amino-6-(D-ribitylamino)uracil and L-tyrosine. This is FO synthase (fbiC) from Mycobacterium bovis (strain ATCC BAA-935 / AF2122/97).